A 121-amino-acid polypeptide reads, in one-letter code: MLNRRECGAAVEVAARRHLERAGLRWLASNVCFRGGELDLVMYDVMSVVFVEVRYRQQENHGSAAQSVDRRKRRKLVMAAQLFLQRHPFLAQVPCRFDVVEGAGRPLQLHWIRDAFRLDDC.

Belongs to the UPF0102 family.

The sequence is that of UPF0102 protein XF_0554 from Xylella fastidiosa (strain 9a5c).